The following is a 121-amino-acid chain: Basic phospholipase A2 homolog AppP2 (121 aa).

7 cysteine pairs are disulfide-bonded: Cys26-Cys115, Cys28-Cys44, Cys43-Cys95, Cys49-Cys121, Cys50-Cys88, Cys57-Cys81, and Cys75-Cys86. An important for membrane-damaging activities in eukaryotes and bacteria; heparin-binding region spans residues 105 to 117 (KKYKAYFKLKCKK).

This sequence belongs to the phospholipase A2 family. Group II subfamily. K49 sub-subfamily. As to quaternary structure, monomer. Expressed by the venom gland.

It localises to the secreted. Snake venom phospholipase A2 (PLA2) that lacks enzymatic activity. Displays edema-inducing activities. Is myotoxic. A model of myotoxic mechanism has been proposed: an apo Lys49-PLA2 is activated by the entrance of a hydrophobic molecule (e.g. fatty acid) at the hydrophobic channel of the protein leading to a reorientation of a monomer. This reorientation causes a transition between 'inactive' to 'active' states, causing alignment of C-terminal and membrane-docking sites (MDoS) side-by-side and putting the membrane-disruption sites (MDiS) in the same plane, exposed to solvent and in a symmetric position for both monomers. The MDoS region stabilizes the toxin on membrane by the interaction of charged residues with phospholipid head groups. Subsequently, the MDiS region destabilizes the membrane with penetration of hydrophobic residues. This insertion causes a disorganization of the membrane, allowing an uncontrolled influx of ions (i.e. calcium and sodium), and eventually triggering irreversible intracellular alterations and cell death. The chain is Basic phospholipase A2 homolog AppP2 from Agkistrodon piscivorus piscivorus (Eastern cottonmouth).